Reading from the N-terminus, the 190-residue chain is Glycerol-3-phosphate acyltransferase 2 (190 aa).

5 helical membrane passes run methionine 1 to valine 21, valine 53 to leucine 73, threonine 76 to alanine 96, valine 110 to leucine 130, and leucine 152 to isoleucine 172.

Belongs to the PlsY family. As to quaternary structure, probably interacts with PlsX.

Its subcellular location is the cell membrane. The catalysed reaction is an acyl phosphate + sn-glycerol 3-phosphate = a 1-acyl-sn-glycero-3-phosphate + phosphate. It functions in the pathway lipid metabolism; phospholipid metabolism. Its function is as follows. Catalyzes the transfer of an acyl group from acyl-phosphate (acyl-PO(4)) to glycerol-3-phosphate (G3P) to form lysophosphatidic acid (LPA). This enzyme utilizes acyl-phosphate as fatty acyl donor, but not acyl-CoA or acyl-ACP. The chain is Glycerol-3-phosphate acyltransferase 2 from Bacillus anthracis.